We begin with the raw amino-acid sequence, 744 residues long: Protein pthb1 homolog (744 aa).

Positions 722 to 733 (EHSPKELPKIRE) are enriched in basic and acidic residues. A disordered region spans residues 722–744 (EHSPKELPKIREEEEEEEQQVTA). Over residues 734 to 744 (EEEEEEQQVTA) the composition is skewed to acidic residues.

In terms of assembly, part of BBSome complex, that contains bbs-1, bbs-2, bbs-4, bbs-5, osm-12, bbs-8/ttc-8 and bbs-9. Interacts with bbs-1.

Component of the BBSome complex. The BBSome complex is thought to function as a coat complex required for sorting of specific membrane proteins to the primary cilia. The BBSome complex is required for ciliogenesis but is dispensable for centriolar satellite function. Required for proper BBSome complex assembly and its ciliary localization. Required for cilia biogenesis and both the assembly and movement of intraflagellar transport proteins along the ciliary axoneme. In ciliated sensory neurons, required for the sensation of nitric oxide and avoidance of NO-producing organisms like P.aeruginosa. In Caenorhabditis elegans, this protein is Protein pthb1 homolog.